Here is a 174-residue protein sequence, read N- to C-terminus: MLTLTQGKKIVNALRSRLAFEYNGQLIKILSKNIMAVGSLRREEKMLNDVDLLIIVPEKKLLKYVLPNIRIKGLSFSVKVCGERKCVLFIEWEKKTYQLDLFTALAEEKPYAIFHFTGPVSYLIRIRAALKKKNYKLNQYGLFKNQTLVPLKITTERELIKELGFTYRVPKKRL.

The segment at 42–51 (REEKMLNDVD) is involved in ssDNA binding. Mg(2+) is bound by residues Asp49 and Asp51. The cysteines at positions 81 and 86 are disulfide-linked. Mg(2+) is bound at residue Asp100.

The protein belongs to the DNA polymerase type-X family. Requires Mg(2+) as cofactor.

It localises to the virion. It catalyses the reaction DNA(n) + a 2'-deoxyribonucleoside 5'-triphosphate = DNA(n+1) + diphosphate. In terms of biological role, error-prone polymerase lacking a proofreading 3'-5' exonuclease which catalyzes the gap-filling reaction during the DNA repair process. Specifically binds intermediates in the single-nucleotide base-excision repair process. Also catalyzes DNA polymerization with low nucleotide-insertion fidelity. Probably acts as a strategic DNA mutase, which gives rise to a rapid emergence of variants. Generates mismatched G-G pairs, in that case, the polymerase first binds the deoxynucleotide followed by mismatch formation. Together with the viral DNA ligase, fills the single nucleotide gaps generated by the AP endonuclease. Binds DNA with high affinity via the helix alphaE. The polypeptide is Repair DNA polymerase X (Ornithodoros (relapsing fever ticks)).